The following is a 395-amino-acid chain: NAD(P)H-quinone oxidoreductase subunit H (395 aa).

Belongs to the complex I 49 kDa subunit family. In terms of assembly, NDH-1 can be composed of about 15 different subunits; different subcomplexes with different compositions have been identified which probably have different functions.

The protein resides in the cellular thylakoid membrane. The enzyme catalyses a plastoquinone + NADH + (n+1) H(+)(in) = a plastoquinol + NAD(+) + n H(+)(out). It catalyses the reaction a plastoquinone + NADPH + (n+1) H(+)(in) = a plastoquinol + NADP(+) + n H(+)(out). Functionally, NDH-1 shuttles electrons from an unknown electron donor, via FMN and iron-sulfur (Fe-S) centers, to quinones in the respiratory and/or the photosynthetic chain. The immediate electron acceptor for the enzyme in this species is believed to be plastoquinone. Couples the redox reaction to proton translocation, and thus conserves the redox energy in a proton gradient. Cyanobacterial NDH-1 also plays a role in inorganic carbon-concentration. The protein is NAD(P)H-quinone oxidoreductase subunit H of Prochlorococcus marinus (strain MIT 9301).